The following is a 167-amino-acid chain: Fluoride-specific ion channel FluC (167 aa).

4 helical membrane-spanning segments follow: residues 32–52, 69–89, 102–122, and 137–157; these read HVTP…GALA, IGTL…IAYV, FMIT…AELF, and LGLH…TIGL. The Na(+) site is built by Gly109 and Ser112.

This sequence belongs to the fluoride channel Fluc/FEX (TC 1.A.43) family.

It is found in the cell inner membrane. The catalysed reaction is fluoride(in) = fluoride(out). With respect to regulation, na(+) is not transported, but it plays an essential structural role and its presence is essential for fluoride channel function. Its function is as follows. Fluoride-specific ion channel. Important for reducing fluoride concentration in the cell, thus reducing its toxicity. This is Fluoride-specific ion channel FluC from Xanthomonas oryzae pv. oryzae (strain KACC10331 / KXO85).